The following is a 278-amino-acid chain: MLDLVVIGHVSIDTLIFPDGRRVTMPGGAAAGVATSAALAGAKVGLVTKIGTDFPKEWLQALSSVLDISGVQILPGKTIHIQMIYHEDGSVDAPVEMGVAQKMGEIPIPEEYLDAKVFHISPIPPEEQLKLLNRLKGKRVTVDFNPTYKEEYIKRRDLLREIVSRVEIVFPNEREALMITGAEDVKDAARILHGWGAKLVVITRGEKGVLVYDGSFREFPALPIKPEEIVDPTGGGDAFAGGFLAGYSRGRPLEECVRLGLERAREVLKKWGDWSITV.

An ATP-binding site is contributed by 203–208; that stretch reads TRGEKG. The active-site Proton acceptor is the Asp237.

The protein belongs to the carbohydrate kinase PfkB family. The cofactor is Mg(2+).

The enzyme catalyses cytidine + ATP = CMP + ADP + H(+). In terms of biological role, involved in nucleoside degradation. Phosphorylates cytidine to CMP. Can also act on deoxycytidine and uridine, but is most active with cytidine. ATP is the most preferred phosphate donor, but it can also use GTP, CTP or UTP. This Thermococcus kodakarensis (strain ATCC BAA-918 / JCM 12380 / KOD1) (Pyrococcus kodakaraensis (strain KOD1)) protein is Cytidine kinase.